Reading from the N-terminus, the 72-residue chain is uncharacterized protein (72 aa).

Belongs to the ycf76 family.

The protein localises to the plastid. It is found in the chloroplast. This is an uncharacterized protein from Oryza nivara (Indian wild rice).